Reading from the N-terminus, the 284-residue chain is S-formylglutathione hydrolase (284 aa).

Position 2 is an N-acetylalanine (Ala-2). Residues Asn-63 and Lys-67 each coordinate substrate. Catalysis depends on charge relay system residues Ser-152, Asp-229, and His-262.

This sequence belongs to the esterase D family. As to quaternary structure, homodimer.

The catalysed reaction is S-formylglutathione + H2O = formate + glutathione + H(+). With respect to regulation, activity toward p-nitrophenyl acetate inhibited by N-ethylmaleimide, 10-(fluoroethoxyphosphinyl)-N-(biotinamidopentyl)decanamide (FP-biotin), iodoacetamide, CuCl(2) and ZnSO(4), but not by phenylmethylsulfonyl fluoride, EDTA, Mg(2+), Mn(2+), Ca(2+) or paraoxon, an organo-phosphate inhibitor of serine hydrolases. Serine hydrolase which catalyzes the hydrolysis of S-formylglutathione to glutathione and formic acid. Also hydrolyzes S-acetylglutathione and a range of carboxyesters in vitro. Involved in the detoxification of formaldehyde. The protein is S-formylglutathione hydrolase (SFGH) of Arabidopsis thaliana (Mouse-ear cress).